The following is a 710-amino-acid chain: Effector protein AvrPphD (710 aa).

Residues 1-15 are compositionally biased toward polar residues; that stretch reads MNPLRSIQHNITTPP. Disordered stretches follow at residues 1–36, 136–155, and 173–207; these read MNPLRSIQHNITTPPISGGQPLDAVGPQAQQSHPKR, ISFDVPSPPPAHGSASSVLS, and SSSLETPLVSSPDHSRPPSQPKPVHIGSVRRDSGS.

It is found in the secreted. Effector protein involved in non-host recognition and able to elicit hypersensitive response (HR). The protein is Effector protein AvrPphD (avrPphD) of Pseudomonas savastanoi pv. phaseolicola (Pseudomonas syringae pv. phaseolicola).